A 365-amino-acid chain; its full sequence is MLKRTPLFHAYETFGAKTIDFGGWELPVQFSSIKEEHEAVRTKAGLFDVSHMGEVEIKGQDALPFLQRLLTNDVSKLTDGKALYTAMCYEDGGTVDDLLVYQKEKNDYLLVINASNIEKDVEWLLQHQGENDVLIQNVSDEIALLALQGPLAADIMKDVADEEVTSLKPFTFLSKAEVAQKEVLVSRTGYTGEDGFEIYCQSEDAVHIWSALLKVGAPKGLIPCGLGARDTLRFEARLPLYGQELTKDISPLEGGIGFAVKTDKEANFIGKEALKKQKEEGPKRKLVGIEMIDKGIPRTDYPVFSGEKQIGVVTTGTQSPTLKKNVGLALIESSQAQLGTVVEVQVRKKRLKAKIVATPFYKRAK.

It belongs to the GcvT family. The glycine cleavage system is composed of four proteins: P, T, L and H.

It catalyses the reaction N(6)-[(R)-S(8)-aminomethyldihydrolipoyl]-L-lysyl-[protein] + (6S)-5,6,7,8-tetrahydrofolate = N(6)-[(R)-dihydrolipoyl]-L-lysyl-[protein] + (6R)-5,10-methylene-5,6,7,8-tetrahydrofolate + NH4(+). The glycine cleavage system catalyzes the degradation of glycine. The protein is Aminomethyltransferase of Bacillus pumilus (strain SAFR-032).